Consider the following 324-residue polypeptide: tRNA pseudouridine synthase B (324 aa).

The active-site Nucleophile is Asp49. A disordered region spans residues 87–107 (RSTDDLEGQPTKTSDKRPSRE).

Belongs to the pseudouridine synthase TruB family. Type 1 subfamily.

The catalysed reaction is uridine(55) in tRNA = pseudouridine(55) in tRNA. Functionally, responsible for synthesis of pseudouridine from uracil-55 in the psi GC loop of transfer RNAs. This chain is tRNA pseudouridine synthase B, found in Brucella melitensis biotype 1 (strain ATCC 23456 / CCUG 17765 / NCTC 10094 / 16M).